The following is a 1047-amino-acid chain: Jouberin (1047 aa).

Basic and acidic residues-rich tracts occupy residues 1–17 and 77–86; these read MEQE…EKVR and LLHDDKLGSE. Disordered regions lie at residues 1–44 and 67–185; these read MEQE…LTEA and EQLT…SPVH. The segment at 1-285 is interaction with HAP1; the sequence is MEQETPEKVD…IFNENFPYLL (285 aa). A compositionally biased stretch (basic residues) spans 87–96; the sequence is KRKKKKKKKV. The segment covering 116 to 132 has biased composition (basic and acidic residues); that stretch reads GEQKKEGAPEGSHHREG. A compositionally biased stretch (basic residues) spans 150–160; the sequence is PKPKKMKKKPK. A compositionally biased stretch (basic and acidic residues) spans 173–185; the sequence is GVHEITGRDSPVH. WD repeat units lie at residues 458 to 500, 503 to 542, 546 to 586, 593 to 632, 649 to 688, 692 to 731, and 736 to 777; these read AGER…FMRE, GHLN…TSTF, PHPS…DAAI, VHKS…TDVQ, FRGV…ARKF, ANYR…QVAM, and PFKS…AQQE. S854 carries the post-translational modification Phosphoserine. The SH3 domain maps to 903-963; sequence DPPPMVVALY…PANHVASETL (61 aa). Composition is skewed to basic and acidic residues over residues 964–1003 and 1012–1040; these read YRDS…RFLD and GHSE…EPTV. Residues 964 to 1047 form a disordered region; sequence YRDSPPKVKE…PTVRKVTLIE (84 aa). Position 975 is a phosphoserine (S975).

In terms of assembly, self-associates. Part of the tectonic-like complex (also named B9 complex). Interacts with MKS1. Interacts with NPHP1; probably as heterodimers and/or AHI1(2):NPHP1(2) heterotetramers. Interacts (via SH3 domain) with the dynamin GTPase DNM2. Interacts with HAP1; probably as AHI1(2):HAP1(2) heterotetramers. Interacts with RAB8A. Interacts with CEND1. Interacts with SPATA7.

It is found in the cytoplasm. It localises to the cytoskeleton. The protein resides in the cilium basal body. Its subcellular location is the microtubule organizing center. The protein localises to the centrosome. It is found in the centriole. It localises to the cell junction. The protein resides in the adherens junction. Involved in vesicle trafficking and required for ciliogenesis, formation of primary non-motile cilium, and recruitment of RAB8A to the basal body of primary cilium. Component of the tectonic-like complex, a complex localized at the transition zone of primary cilia and acting as a barrier that prevents diffusion of transmembrane proteins between the cilia and plasma membranes. Involved in neuronal differentiation. As a positive modulator of classical Wnt signaling, may play a crucial role in ciliary signaling during cerebellum embryonic development. In Rattus norvegicus (Rat), this protein is Jouberin (Ahi1).